The sequence spans 413 residues: Arogenate dehydratase/prephenate dehydratase 6, chloroplastic (413 aa).

The transit peptide at 1–44 (MKALSSSSPILGASQPATATALIARSGRSEWQSSCAILTSKVIS) directs the protein to the chloroplast. The 178-residue stretch at 117-294 (RVAYQGVPGA…NVTRFVMLAR (178 aa)) folds into the Prephenate dehydratase domain. The ACT domain occupies 308–399 (SIVFAHEKGT…SFLRVLGSYP (92 aa)).

In terms of tissue distribution, expressed in roots, leaves, stems, flowers and siliques.

It is found in the plastid. The protein localises to the chloroplast stroma. It carries out the reaction L-arogenate + H(+) = L-phenylalanine + CO2 + H2O. It catalyses the reaction prephenate + H(+) = 3-phenylpyruvate + CO2 + H2O. The protein operates within amino-acid biosynthesis; L-phenylalanine biosynthesis; L-phenylalanine from L-arogenate: step 1/1. It participates in amino-acid biosynthesis; L-phenylalanine biosynthesis; phenylpyruvate from prephenate: step 1/1. Functionally, converts the prephenate produced from the shikimate-chorismate pathway into phenylalanine. Dehydratase that uses arogenate and prephenate as substrates. Utilzes more efficiently arogenate than prephenate. This chain is Arogenate dehydratase/prephenate dehydratase 6, chloroplastic, found in Arabidopsis thaliana (Mouse-ear cress).